The following is a 387-amino-acid chain: 3-ketoacyl-CoA thiolase (387 aa).

C91 serves as the catalytic Acyl-thioester intermediate. Catalysis depends on proton acceptor residues H343 and C373.

The protein belongs to the thiolase-like superfamily. Thiolase family. In terms of assembly, heterotetramer of two alpha chains (FadB) and two beta chains (FadA).

The protein localises to the cytoplasm. The enzyme catalyses an acyl-CoA + acetyl-CoA = a 3-oxoacyl-CoA + CoA. It participates in lipid metabolism; fatty acid beta-oxidation. Functionally, catalyzes the final step of fatty acid oxidation in which acetyl-CoA is released and the CoA ester of a fatty acid two carbons shorter is formed. The sequence is that of 3-ketoacyl-CoA thiolase from Aeromonas hydrophila subsp. hydrophila (strain ATCC 7966 / DSM 30187 / BCRC 13018 / CCUG 14551 / JCM 1027 / KCTC 2358 / NCIMB 9240 / NCTC 8049).